Here is a 227-residue protein sequence, read N- to C-terminus: YEATS domain-containing protein 4 (227 aa).

Positions 15–158 (RVKGVTIVKP…AMMQQLLTTS (144 aa)) constitute a YEATS domain. A Glycyl lysine isopeptide (Lys-Gly) (interchain with G-Cter in SUMO2) cross-link involves residue lysine 37. Positions 93–97 (WGEFE) are diacetylated histone H3 binding. Residues 163–227 (LGAYKHETEF…LEEDDQAKDI (65 aa)) are interaction with MLLT10. The segment at 168–227 (HETEFAELEVKTREKLEAAKKKTSFEIAELKERLKASRETINCLKNEIRKLEEDDQAKDI) is interaction with TACC1. The stretch at 178 to 226 (KTREKLEAAKKKTSFEIAELKERLKASRETINCLKNEIRKLEEDDQAKD) forms a coiled coil.

As to quaternary structure, component of numerous complexes with chromatin remodeling and histone acetyltransferase activity. Component of the NuA4 histone acetyltransferase complex which contains the catalytic subunit KAT5/TIP60 and the subunits EP400, TRRAP/PAF400, BRD8/SMAP, EPC1, DMAP1/DNMAP1, RUVBL1/TIP49, RUVBL2, ING3, actin, ACTL6A/BAF53A, MORF4L1/MRG15, MORF4L2/MRGX, MRGBP, YEATS4/GAS41, VPS72/YL1 and MEAF6. The NuA4 complex interacts with MYC and the adenovirus E1A protein. Component of a NuA4-related complex which contains EP400, TRRAP/PAF400, SRCAP, BRD8/SMAP, EPC1, DMAP1/DNMAP1, RUVBL1/TIP49, RUVBL2, actin, ACTL6A/BAF53A, VPS72 and YEATS4/GAS41. Interacts with MLLT10/AF10. Also interacts with the SWI/SNF component SMARCB1/BAF47, TACC1 and TACC2, and the nuclear matrix protein NUMA1. In terms of tissue distribution, expressed in brain, heart, kidney, liver, lung, pancreas, placenta and skeletal muscle.

Its subcellular location is the nucleus. Chromatin reader component of the NuA4 histone acetyltransferase (HAT) complex, a complex involved in transcriptional activation of select genes principally by acetylation of nucleosomal histones H4 and H2A. Specifically recognizes and binds acylated histone H3, with a preference for histone H3 diacetylated at 'Lys-18' and 'Lys-27' (H3K18ac and H3K27ac) or histone H3 diacetylated at 'Lys-14' and 'Lys-27' (H3K14ac and H3K27ac). Also able to recognize and bind crotonylated histone H3. May also recognize and bind histone H3 succinylated at 'Lys-122' (H3K122succ); additional evidences are however required to confirm this result in vivo. Plays a key role in histone variant H2AZ1/H2A.Z deposition into specific chromatin regions: recognizes and binds H3K14ac and H3K27ac on the promoters of actively transcribed genes and recruits NuA4-related complex to deposit H2AZ1/H2A.Z. H2AZ1/H2A.Z deposition is required for maintenance of embryonic stem cell. This chain is YEATS domain-containing protein 4, found in Homo sapiens (Human).